A 452-amino-acid polypeptide reads, in one-letter code: Aspartyl/glutamyl-tRNA(Asn/Gln) amidotransferase subunit B (452 aa).

This sequence belongs to the GatB/GatE family. GatB subfamily. As to quaternary structure, heterotrimer of A, B and C subunits.

It catalyses the reaction L-glutamyl-tRNA(Gln) + L-glutamine + ATP + H2O = L-glutaminyl-tRNA(Gln) + L-glutamate + ADP + phosphate + H(+). The catalysed reaction is L-aspartyl-tRNA(Asn) + L-glutamine + ATP + H2O = L-asparaginyl-tRNA(Asn) + L-glutamate + ADP + phosphate + 2 H(+). Its function is as follows. Allows the formation of correctly charged Asn-tRNA(Asn) or Gln-tRNA(Gln) through the transamidation of misacylated Asp-tRNA(Asn) or Glu-tRNA(Gln) in organisms which lack either or both of asparaginyl-tRNA or glutaminyl-tRNA synthetases. The reaction takes place in the presence of glutamine and ATP through an activated phospho-Asp-tRNA(Asn) or phospho-Glu-tRNA(Gln). This is Aspartyl/glutamyl-tRNA(Asn/Gln) amidotransferase subunit B from Methanosphaera stadtmanae (strain ATCC 43021 / DSM 3091 / JCM 11832 / MCB-3).